A 329-amino-acid chain; its full sequence is D-alanine--D-alanine ligase (329 aa).

The ATP-grasp domain maps to 120–326 (KLWYDALDIP…FHEFLEDCIN (207 aa)). ATP is bound at residue 150–205 (AFEKWGKVFVKAARQGSSVGCYSVAEKQAIAKAVNDAFGYSDQVLVEKAVKPRELE). Positions 280, 293, and 295 each coordinate Mg(2+).

This sequence belongs to the D-alanine--D-alanine ligase family. It depends on Mg(2+) as a cofactor. The cofactor is Mn(2+).

It is found in the cytoplasm. It carries out the reaction 2 D-alanine + ATP = D-alanyl-D-alanine + ADP + phosphate + H(+). The protein operates within cell wall biogenesis; peptidoglycan biosynthesis. In terms of biological role, cell wall formation. The chain is D-alanine--D-alanine ligase from Vibrio parahaemolyticus serotype O3:K6 (strain RIMD 2210633).